Consider the following 166-residue polypeptide: 3-isopropylmalate dehydratase small subunit 2 (166 aa).

Belongs to the LeuD family. LeuD type 2 subfamily. As to quaternary structure, heterodimer of LeuC and LeuD.

The enzyme catalyses (2R,3S)-3-isopropylmalate = (2S)-2-isopropylmalate. Its pathway is amino-acid biosynthesis; L-leucine biosynthesis; L-leucine from 3-methyl-2-oxobutanoate: step 2/4. Functionally, catalyzes the isomerization between 2-isopropylmalate and 3-isopropylmalate, via the formation of 2-isopropylmaleate. The sequence is that of 3-isopropylmalate dehydratase small subunit 2 (leuD2) from Thermotoga maritima (strain ATCC 43589 / DSM 3109 / JCM 10099 / NBRC 100826 / MSB8).